We begin with the raw amino-acid sequence, 83 residues long: RNA-binding protein Hfq (83 aa).

The region spanning Asp-10–Val-69 is the Sm domain.

This sequence belongs to the Hfq family. As to quaternary structure, homohexamer.

RNA chaperone that binds small regulatory RNA (sRNAs) and mRNAs to facilitate mRNA translational regulation in response to envelope stress, environmental stress and changes in metabolite concentrations. Also binds with high specificity to tRNAs. In Delftia acidovorans (strain DSM 14801 / SPH-1), this protein is RNA-binding protein Hfq.